Consider the following 233-residue polypeptide: Adapter protein MecA (233 aa).

Belongs to the MecA family. As to quaternary structure, homodimer.

Enables the recognition and targeting of unfolded and aggregated proteins to the ClpC protease or to other proteins involved in proteolysis. This Lactococcus lactis subsp. lactis (strain IL1403) (Streptococcus lactis) protein is Adapter protein MecA.